Reading from the N-terminus, the 367-residue chain is Phthiodiolone/phenolphthiodiolone dimycocerosates ketoreductase (367 aa).

Belongs to the mer family. Phthiodiolone/phenolphthiodiolone dimycocerosates ketoreductase subfamily.

Catalyzes the reduction of the keto moiety of phthiodiolone dimycocerosates (DIM B) and glycosylated phenolphthiodiolone dimycocerosates to form the intermediate compounds phthiotriol and glycosylated phenolphthiotriol dimycocerosates during phthiocerol dimycocerosates (DIM A) and glycosylated phenolphthiocerol dimycocerosates (PGL) biosynthesis. This chain is Phthiodiolone/phenolphthiodiolone dimycocerosates ketoreductase, found in Mycobacterium kansasii.